Reading from the N-terminus, the 262-residue chain is Cytochrome c oxidase subunit 3 (262 aa).

Transmembrane regions (helical) follow at residues 13–33, 38–58, 82–102, 134–154, 159–179, 200–220, and 237–257; these read PWPL…VMYM, GGGL…YVWW, GMLL…WAFF, TIIL…ILAG, GIIS…FQAL, ATGF…VCLF, and AAAW…VCIY.

This sequence belongs to the cytochrome c oxidase subunit 3 family. As to quaternary structure, component of the cytochrome c oxidase (complex IV, CIV), a multisubunit enzyme composed of a catalytic core of 3 subunits and several supernumerary subunits. The complex exists as a monomer or a dimer and forms supercomplexes (SCs) in the inner mitochondrial membrane with ubiquinol-cytochrome c oxidoreductase (cytochrome b-c1 complex, complex III, CIII).

It localises to the mitochondrion inner membrane. It carries out the reaction 4 Fe(II)-[cytochrome c] + O2 + 8 H(+)(in) = 4 Fe(III)-[cytochrome c] + 2 H2O + 4 H(+)(out). In terms of biological role, component of the cytochrome c oxidase, the last enzyme in the mitochondrial electron transport chain which drives oxidative phosphorylation. The respiratory chain contains 3 multisubunit complexes succinate dehydrogenase (complex II, CII), ubiquinol-cytochrome c oxidoreductase (cytochrome b-c1 complex, complex III, CIII) and cytochrome c oxidase (complex IV, CIV), that cooperate to transfer electrons derived from NADH and succinate to molecular oxygen, creating an electrochemical gradient over the inner membrane that drives transmembrane transport and the ATP synthase. Cytochrome c oxidase is the component of the respiratory chain that catalyzes the reduction of oxygen to water. Electrons originating from reduced cytochrome c in the intermembrane space (IMS) are transferred via the dinuclear copper A center (CU(A)) of subunit 2 and heme A of subunit 1 to the active site in subunit 1, a binuclear center (BNC) formed by heme A3 and copper B (CU(B)). The BNC reduces molecular oxygen to 2 water molecules using 4 electrons from cytochrome c in the IMS and 4 protons from the mitochondrial matrix. The polypeptide is Cytochrome c oxidase subunit 3 (COX3) (Prototheca wickerhamii).